The primary structure comprises 446 residues: Nitrate/nitrite binding protein NrtA (446 aa).

A signal peptide spans 1 to 28 (MSNFSRSTRRKFMFTAGAAAIGGVVLHG). Residue cysteine 29 is the site of N-palmitoyl cysteine attachment. The S-diacylglycerol cysteine moiety is linked to residue cysteine 29. The nitrate site is built by tryptophan 102, glutamine 155, histidine 196, glycine 240, and lysine 269.

Belongs to the CmpA/NrtA family. In terms of assembly, the complex is composed of two ATP-binding proteins (NrtC and NrtD), two transmembrane proteins (NrtB) and a solute-binding protein (NrtA).

It is found in the cell inner membrane. Functionally, part of the ABC transporter complex NrtABCD involved in nitrate uptake. The complex is probably also involved in nitrite transport. NrtA is the substrate-binding protein. Binds nitrate. The sequence is that of Nitrate/nitrite binding protein NrtA from Synechocystis sp. (strain ATCC 27184 / PCC 6803 / Kazusa).